The primary structure comprises 124 residues: Large ribosomal subunit protein bL12 (124 aa).

This sequence belongs to the bacterial ribosomal protein bL12 family. Homodimer. Part of the ribosomal stalk of the 50S ribosomal subunit. Forms a multimeric L10(L12)X complex, where L10 forms an elongated spine to which 2 to 4 L12 dimers bind in a sequential fashion. Binds GTP-bound translation factors.

Forms part of the ribosomal stalk which helps the ribosome interact with GTP-bound translation factors. Is thus essential for accurate translation. This is Large ribosomal subunit protein bL12 from Phytoplasma australiense.